The following is an 87-amino-acid chain: Cobalt transport protein CbiN (87 aa).

2 helical membrane passes run 4–24 and 58–78; these read LLLLLILLIFAAKVTAEEWAG and MLFSLQAAIGSLIIGYFLGYY.

The protein belongs to the CbiN family. Forms an energy-coupling factor (ECF) transporter complex composed of an ATP-binding protein (A component, CbiO), a transmembrane protein (T component, CbiQ) and 2 possible substrate-capture proteins (S components, CbiM and CbiN) of unknown stoichimetry.

It localises to the cell membrane. It participates in cofactor biosynthesis; adenosylcobalamin biosynthesis. Part of the energy-coupling factor (ECF) transporter complex CbiMNOQ involved in cobalt import. This is Cobalt transport protein CbiN from Archaeoglobus fulgidus (strain ATCC 49558 / DSM 4304 / JCM 9628 / NBRC 100126 / VC-16).